The following is a 293-amino-acid chain: NAD-dependent protein deacetylase (293 aa).

Positions 1-284 constitute a Deacetylase sirtuin-type domain; sequence MTVAITQTGP…QPPDPLHTAT (284 aa). Residues 27-47 and 105-108 each bind NAD(+); these read GAGC…GGWK and QNVD. Histidine 123 serves as the catalytic Proton acceptor. Zn(2+) contacts are provided by cysteine 131, cysteine 134, cysteine 182, and cysteine 185. Residues 222-224, 248-250, and cysteine 266 each bind NAD(+); these read GSS and NFG.

This sequence belongs to the sirtuin family. Class II subfamily. Zn(2+) serves as cofactor.

It localises to the cytoplasm. The catalysed reaction is N(6)-acetyl-L-lysyl-[protein] + NAD(+) + H2O = 2''-O-acetyl-ADP-D-ribose + nicotinamide + L-lysyl-[protein]. Its function is as follows. NAD-dependent protein deacetylase which modulates the activities of several enzymes which are inactive in their acetylated form. In Xanthomonas campestris pv. campestris (strain B100), this protein is NAD-dependent protein deacetylase.